The following is a 117-amino-acid chain: Large ribosomal subunit protein bL20 (117 aa).

The protein belongs to the bacterial ribosomal protein bL20 family.

Functionally, binds directly to 23S ribosomal RNA and is necessary for the in vitro assembly process of the 50S ribosomal subunit. It is not involved in the protein synthesizing functions of that subunit. This Leptospira borgpetersenii serovar Hardjo-bovis (strain JB197) protein is Large ribosomal subunit protein bL20.